Here is a 234-residue protein sequence, read N- to C-terminus: uncharacterized protein (234 aa).

The disordered stretch occupies residues 199-234 (DNQNEPLENYSDDNNFSNFDETEHVDDSEMNDDNFI).

This is an uncharacterized protein from Buchnera aphidicola subsp. Schizaphis graminum (strain Sg).